Here is a 530-residue protein sequence, read N- to C-terminus: Autoinducer-2 kinase (530 aa).

This sequence belongs to the FGGY kinase family.

It is found in the cytoplasm. The enzyme catalyses (S)-4,5-dihydroxypentane-2,3-dione + ATP = (2S)-2-hydroxy-3,4-dioxopentyl phosphate + ADP + H(+). In terms of biological role, catalyzes the phosphorylation of autoinducer-2 (AI-2) to phospho-AI-2, which subsequently inactivates the transcriptional regulator LsrR and leads to the transcription of the lsr operon. Phosphorylates the ring-open form of (S)-4,5-dihydroxypentane-2,3-dione (DPD), which is the precursor to all AI-2 signaling molecules, at the C5 position. The protein is Autoinducer-2 kinase of Escherichia coli O139:H28 (strain E24377A / ETEC).